The primary structure comprises 154 residues: Transcription antitermination protein NusB (154 aa).

Belongs to the NusB family.

Its function is as follows. Involved in transcription antitermination. Required for transcription of ribosomal RNA (rRNA) genes. Binds specifically to the boxA antiterminator sequence of the ribosomal RNA (rrn) operons. This Methylobacillus flagellatus (strain ATCC 51484 / DSM 6875 / VKM B-1610 / KT) protein is Transcription antitermination protein NusB.